The chain runs to 507 residues: MQLTYFLFQVAVALLAIVTYILHRKLTYFKRRGIPYDKPHPLRGNMEGYKKTRTVHEIHQEYYNKYRNSKAPFVGFYLFQKPAAFVIDLELAKQILIKNFSNFTDKGIYYNEKDDPMSAHLFNLDGPQWRLLRSKLSSTFTSGKMKFMYPTVVSVAEEFMAVMHEKVSENSILDVRDLVARFTVDVIGTCAFGIKCNSLRDEKAEFLHFGRRALLDSRHGNLVSGLMRSYPNLARRLGLCRNTAQIQEFYQRIVKETVTLREKENIKRNDFMDMLIGLKNQKNMTLENGEVVKGLTMDEIVAQAFVFFIAGFDTSSSTMGFALYELAKNPSIQDKVRAELGQVLEQHDQKFTYECIKDLKYLDQVINETLRHYTIVPNVDRVAAKRFVVPGNPKFVIEAGQSVIIPSSAIHHDPSIYPEPNEFRPERFSPEESAKRPSVAWLPFGEGPRNCIGLRFGQMQARIGLAMLIKNFTFSPCSATPDPLTFDPHSAILLGIKGGIQLKVEAI.

Cys451 provides a ligand contact to heme.

The protein belongs to the cytochrome P450 family. The cofactor is heme.

The protein localises to the endoplasmic reticulum membrane. Its subcellular location is the microsome membrane. Its function is as follows. May be involved in the metabolism of insect hormones and in the breakdown of synthetic insecticides. The sequence is that of Probable cytochrome P450 6a18 (Cyp6a18) from Drosophila melanogaster (Fruit fly).